Reading from the N-terminus, the 567-residue chain is Chitinase 3 (567 aa).

The signal sequence occupies residues 1–16 (MLYLLTIFSLLLPALA). The region spanning 23 to 313 (SNVAVYWGQN…ENMKAIVKKA (291 aa)) is the GH18 domain. Residue E157 is the Proton donor of the active site. A glycan (N-linked (GlcNAc...) asparagine) is linked at N159. A disordered region spans residues 313-471 (ASPGEETTSS…TSALSSSTTT (159 aa)). 2 stretches are compositionally biased toward low complexity: residues 319 to 436 (TTSS…SLSS) and 444 to 471 (STTTGISKSSSTKPATSTTSALSSSTTT).

It belongs to the glycosyl hydrolase 18 family. Chitinase class III subfamily.

It is found in the secreted. The enzyme catalyses Random endo-hydrolysis of N-acetyl-beta-D-glucosaminide (1-&gt;4)-beta-linkages in chitin and chitodextrins.. Functionally, chitinase involved in the remodeling of chitin in the fungal cell wall. Plays a role in cell separation. In Candida albicans (strain SC5314 / ATCC MYA-2876) (Yeast), this protein is Chitinase 3 (CHT3).